The sequence spans 248 residues: Tyrosine recombinase XerD-like (248 aa).

The region spanning methionine 1–tyrosine 72 is the Core-binding (CB) domain. Residues aspartate 85 to serine 248 enclose the Tyr recombinase domain. Catalysis depends on residues lysine 149 and arginine 213. Catalysis depends on tyrosine 245, which acts as the O-(3'-phospho-DNA)-tyrosine intermediate.

It belongs to the 'phage' integrase family. XerD-like subfamily.

It localises to the cytoplasm. Its function is as follows. Putative tyrosine recombinase. Not involved in the cutting and rejoining of the recombining DNA molecules on dif(SL) site. The polypeptide is Tyrosine recombinase XerD-like (Streptococcus pyogenes serotype M4 (strain MGAS10750)).